Consider the following 221-residue polypeptide: Iron-sulfur cluster repair protein YtfE (221 aa).

This sequence belongs to the RIC family. YtfE subfamily. Homodimer.

It localises to the cytoplasm. Di-iron-containing protein involved in the repair of iron-sulfur clusters damaged by oxidative and nitrosative stress conditions. The sequence is that of Iron-sulfur cluster repair protein YtfE from Dickeya chrysanthemi (strain Ech1591) (Dickeya zeae (strain Ech1591)).